A 341-amino-acid polypeptide reads, in one-letter code: Glucokinase (341 aa).

An ATP-binding site is contributed by 18–23 (GDIGGT).

This sequence belongs to the bacterial glucokinase family.

It localises to the cytoplasm. The enzyme catalyses D-glucose + ATP = D-glucose 6-phosphate + ADP + H(+). This chain is Glucokinase, found in Rhizobium etli (strain ATCC 51251 / DSM 11541 / JCM 21823 / NBRC 15573 / CFN 42).